Here is a 579-residue protein sequence, read N- to C-terminus: Protein inscuteable homolog (579 aa).

Positions 74–89 (SVQRWMEDLKLMTECE) are important for interaction with GPSM2. The PDZ-binding signature appears at 576–579 (ESFV).

In terms of assembly, interacts with ALS2CR19/PAR3B and GPSM1/AGS3. Interacts with F2RL2/PAR3. Interacts with GPSM2/LGN (via TPR repeat region). As to expression, expressed in brain, kidney, liver, testis and skin.

The protein resides in the cytoplasm. Its subcellular location is the cell cortex. In terms of biological role, may function as an adapter linking the Par3 complex to the GPSM1/GPSM2 complex. Involved in spindle orientation during mitosis. May regulate cell proliferation and differentiation in the developing nervous system. May play a role in the asymmetric division of fibroblasts and participate in the process of stratification of the squamous epithelium. This is Protein inscuteable homolog (Insc) from Mus musculus (Mouse).